Consider the following 187-residue polypeptide: Cell division protein SepF (187 aa).

The tract at residues 21-97 is disordered; the sequence is EVEVPDKQQQ…ATPNNASQES (77 aa). 2 stretches are compositionally biased toward polar residues: residues 38–63 and 70–97; these read EQSQ…YTTT and RMSN…SQES.

The protein belongs to the SepF family. Homodimer. Interacts with FtsZ.

The protein resides in the cytoplasm. In terms of biological role, cell division protein that is part of the divisome complex and is recruited early to the Z-ring. Probably stimulates Z-ring formation, perhaps through the cross-linking of FtsZ protofilaments. Its function overlaps with FtsA. This Staphylococcus aureus (strain MRSA252) protein is Cell division protein SepF.